The chain runs to 323 residues: Beta-ketoacyl-[acyl-carrier-protein] synthase III (323 aa).

Active-site residues include Cys-112 and His-250. The segment at 251–255 (QANQR) is ACP-binding. Asn-280 is an active-site residue.

It belongs to the thiolase-like superfamily. FabH family. In terms of assembly, homodimer.

The protein localises to the cytoplasm. The catalysed reaction is malonyl-[ACP] + acetyl-CoA + H(+) = 3-oxobutanoyl-[ACP] + CO2 + CoA. It participates in lipid metabolism; fatty acid biosynthesis. Catalyzes the condensation reaction of fatty acid synthesis by the addition to an acyl acceptor of two carbons from malonyl-ACP. Catalyzes the first condensation reaction which initiates fatty acid synthesis and may therefore play a role in governing the total rate of fatty acid production. Possesses both acetoacetyl-ACP synthase and acetyl transacylase activities. Its substrate specificity determines the biosynthesis of branched-chain and/or straight-chain of fatty acids. This is Beta-ketoacyl-[acyl-carrier-protein] synthase III from Oenococcus oeni (strain ATCC BAA-331 / PSU-1).